A 95-amino-acid chain; its full sequence is Co-chaperonin GroES (95 aa).

Belongs to the GroES chaperonin family. In terms of assembly, heptamer of 7 subunits arranged in a ring. Interacts with the chaperonin GroEL.

It localises to the cytoplasm. Functionally, together with the chaperonin GroEL, plays an essential role in assisting protein folding. The GroEL-GroES system forms a nano-cage that allows encapsulation of the non-native substrate proteins and provides a physical environment optimized to promote and accelerate protein folding. GroES binds to the apical surface of the GroEL ring, thereby capping the opening of the GroEL channel. In Chlorobaculum parvum (strain DSM 263 / NCIMB 8327) (Chlorobium vibrioforme subsp. thiosulfatophilum), this protein is Co-chaperonin GroES.